A 629-amino-acid chain; its full sequence is Chaperone protein HtpG (629 aa).

The segment at 1-337 is a; substrate-binding; it reads MAASKETMQF…SSDLPLNVSR (337 aa). The segment at 338–554 is b; sequence EILQGNRVID…ERDMALYMQQ (217 aa). The segment at 555–629 is c; the sequence is LLKQAGHEIS…INQLMLALAG (75 aa).

The protein belongs to the heat shock protein 90 family. As to quaternary structure, homodimer.

Its subcellular location is the cytoplasm. In terms of biological role, molecular chaperone. Has ATPase activity. This Acidithiobacillus ferrooxidans (strain ATCC 23270 / DSM 14882 / CIP 104768 / NCIMB 8455) (Ferrobacillus ferrooxidans (strain ATCC 23270)) protein is Chaperone protein HtpG.